Consider the following 4246-residue polypeptide: Intermembrane lipid transfer protein vps13F (4246 aa).

Residues 2-113 (FESIVSNLLT…LLLQKKLKKL (112 aa)) enclose the Chorein N-terminal domain. Disordered stretches follow at residues 141–271 (IKEK…EDED), 401–420 (PKKSSPSTTTTTPPISPPPK), 591–759 (KAED…SILG), 914–944 (VSSSPSPVSSPSRDKRLEEETKQEDEKEKKL), 964–1014 (KKSK…TNDE), 1217–1251 (QAQQQAQQQQQSQHPSSNDDNSSSNGGCSVDIKSP), 1356–1379 (ISTHFSSKKNAEDENNNSNLDRVD), 1395–1436 (YNGV…KSKK), 1622–1683 (REKR…KSQS), 2101–2131 (LESLHDHKSSSSSSSSSPPPPPPPSSSQQQQ), 2211–2237 (HHSKEKNQQSADGSGLSPPLSKDEKEK), 2471–2513 (QQQH…KSKQ), 2704–2756 (LSTS…QTTK), 3421–3449 (IDDDQDSDSDSGSSNSSSPSISSSSTSPL), 3611–3652 (KTLN…NNQN), and 3794–3813 (NNNNNQNNNNQNNDFNNIDE). Residues 168–201 (NASPVNSNNNNNNNSNLVSESNIPSSSSSSSSSL) are compositionally biased toward low complexity. Over residues 207-217 (NSSKDANKSDD) the composition is skewed to basic and acidic residues. A compositionally biased stretch (acidic residues) spans 218 to 271 (TDMDVDDDDEFQEATEGDYDNEEEQDDHDEEDDLSDDDDDDDDEEDDYEMEDED). Composition is skewed to low complexity over residues 401–413 (PKKSSPSTTTTTP) and 597–658 (QQQQ…SNST). Residues 659 to 668 (DSKDIMKSSG) show a composition bias toward basic and acidic residues. The span at 669–680 (DKNVNNNNNMGD) shows a compositional bias: low complexity. Over residues 681–702 (NENKDNIDKKEENKNDDQDNKN) the composition is skewed to basic and acidic residues. 2 stretches are compositionally biased toward low complexity: residues 725-747 (SGGWFKWFGWGSSNKSKQQQQQQ) and 914-924 (VSSSPSPVSSP). Basic and acidic residues-rich tracts occupy residues 925-944 (SRDKRLEEETKQEDEKEKKL) and 987-1001 (DKYSTKGTTESREES). Residues 1217 to 1241 (QAQQQAQQQQQSQHPSSNDDNSSSN) show a composition bias toward low complexity. A compositionally biased stretch (acidic residues) spans 1400–1409 (SDDDNNDDEN). 2 stretches are compositionally biased toward basic and acidic residues: residues 1410 to 1431 (DKTTQDDQDDKEKSSGNDDSLK) and 1622 to 1634 (REKRKRLEKDKDN). Positions 1644-1670 (QQSIPQKQQQQQQQQQQQQQQQQQQQQ) are enriched in low complexity. Low complexity-rich tracts occupy residues 2471 to 2506 (QQQHQQQNNNSNNNNNNNNNNNNNNNNNNNNNNNNN), 2705 to 2755 (STST…TQTT), 3430 to 3449 (DSGSSNSSSPSISSSSTSPL), 3613 to 3652 (LNNNNNNNNNNNNNNLNSVTKDNNNNNNQNNNNQNNNNQN), and 3794 to 3809 (NNNNNQNNNNQNNDFN).

Belongs to the VPS13 family.

The protein localises to the membrane. Functionally, mediates the transfer of lipids between membranes at organelle contact sites. This is Intermembrane lipid transfer protein vps13F (vps13F) from Dictyostelium discoideum (Social amoeba).